A 105-amino-acid polypeptide reads, in one-letter code: ATP-dependent Clp protease adapter protein ClpS (105 aa).

The protein belongs to the ClpS family. Binds to the N-terminal domain of the chaperone ClpA.

Functionally, involved in the modulation of the specificity of the ClpAP-mediated ATP-dependent protein degradation. The sequence is that of ATP-dependent Clp protease adapter protein ClpS from Klebsiella pneumoniae (strain 342).